The primary structure comprises 403 residues: Betaine--homocysteine S-methyltransferase 1 (403 aa).

Residues 8–311 (KGLLERLDAG…YHTRAIAEEL (304 aa)) form the Hcy-binding domain. Positions 214, 296, and 297 each coordinate Zn(2+).

In terms of assembly, homotetramer. Zn(2+) is required as a cofactor.

It is found in the cytoplasm. The catalysed reaction is L-homocysteine + glycine betaine = N,N-dimethylglycine + L-methionine. The protein operates within amine and polyamine degradation; betaine degradation; sarcosine from betaine: step 1/2. Its pathway is amino-acid biosynthesis; L-methionine biosynthesis via de novo pathway; L-methionine from L-homocysteine (BhmT route): step 1/1. Functionally, involved in the regulation of homocysteine metabolism. Converts betaine and homocysteine to dimethylglycine and methionine, respectively. This reaction is also required for the irreversible oxidation of choline. In Xenopus tropicalis (Western clawed frog), this protein is Betaine--homocysteine S-methyltransferase 1 (bhmt).